A 140-amino-acid polypeptide reads, in one-letter code: Large ribosomal subunit protein uL16 (140 aa).

The disordered stretch occupies residues 1–24 (MALAPARTKYRKSQKGSRAGNAKR).

The protein belongs to the universal ribosomal protein uL16 family. As to quaternary structure, part of the 50S ribosomal subunit.

In terms of biological role, binds 23S rRNA and is also seen to make contacts with the A and possibly P site tRNAs. The chain is Large ribosomal subunit protein uL16 from Opitutus terrae (strain DSM 11246 / JCM 15787 / PB90-1).